Consider the following 54-residue polypeptide: MAKTNRIKIKLISSSGSKHFYTTTKNKKNQINKLSLKKYDPIIKKHVIYQEKKI.

The protein belongs to the bacterial ribosomal protein bL33 family.

The sequence is that of Large ribosomal subunit protein bL33 from Buchnera aphidicola subsp. Cinara cedri (strain Cc).